We begin with the raw amino-acid sequence, 61 residues long: Probable tautomerase BA_5626/GBAA_5626/BAS5226 (61 aa).

The Proton acceptor; via imino nitrogen role is filled by proline 2.

This sequence belongs to the 4-oxalocrotonate tautomerase family.

In Bacillus anthracis, this protein is Probable tautomerase BA_5626/GBAA_5626/BAS5226.